We begin with the raw amino-acid sequence, 66 residues long: MAEITIPLRDVIEVTEDATYAGVEVTSAIRIGTAYGTTDRILIKTVKQNYVLFTTNKVSILNAINA.

It belongs to the UPF0457 family.

The protein is UPF0457 protein BA_2525/GBAA_2525/BAS2348 of Bacillus anthracis.